The sequence spans 547 residues: CAP-Gly domain-containing linker protein 3 (547 aa).

A disordered region spans residues 1–49; that stretch reads MTKTDPAPMAPPPRGEEEEEEEEDEPVPEAPSPTQERRQKPVVHPSAPA. The span at 16–27 shows a compositional bias: acidic residues; that stretch reads EEEEEEEEDEPV. ANK repeat units lie at residues 117 to 158, 160 to 191, and 197 to 229; these read TDMT…LRSR, TNMN…VVNS, and NHGS…LRNR. The region spanning 314–356 is the CAP-Gly 1 domain; it reads GTTEFASGQWVGVELDEPEGKNDGSVGGVRYFICPPKQGLFAS. The disordered stretch occupies residues 365-413; that stretch reads DAPPSSVTSTPRTPRMDFSRVTGKGRREHKGKKKTPSSPSLGSLQQRDG. Low complexity predominate over residues 367-377; sequence PPSSVTSTPRT. Position 374 is a phosphothreonine (Thr374). The segment covering 387-399 has biased composition (basic residues); sequence GKGRREHKGKKKT. The span at 400–410 shows a compositional bias: polar residues; that stretch reads PSSPSLGSLQQ. Residue Ser401 is modified to Phosphoserine. The 43-residue stretch at 436-478 folds into the CAP-Gly 2 domain; the sequence is GKTDFAPGYWYGIELDQPTGKHDGSVFGVRYFTCPPRHGVFAP. The tract at residues 488 to 547 is goLD; the sequence is STDSPGDSVGAKKVHQVTMTQPKRTFTTVRTPKDIASENSISRLLFCCWFPWMLRAEMQS. Residues Cys534 and Cys535 are each lipidated (S-palmitoyl cysteine).

As to quaternary structure, homodimer. Interacts with AKT1 and AKT2; when AKT1 and AKT2 are phosphorylated and activated, affinity is higher for AKT2. Interacts with ZDHHC13 (via ANK repeats). Interacts with ZDHHC17 (via ANK repeats). Post-translationally, palmitoylation by ZDHHC17 regulates association with the plasma membrane.

The protein resides in the cell membrane. Its subcellular location is the cytoplasm. It is found in the golgi apparatus. The protein localises to the golgi stack. Functionally, functions as a cytoplasmic linker protein. Involved in TGN-endosome dynamics. May modulate the cellular compartmentalization of AKT kinase family and promote its cell membrane localization, thereby playing a role in glucose transport in adipocytes. In Homo sapiens (Human), this protein is CAP-Gly domain-containing linker protein 3 (CLIP3).